The primary structure comprises 450 residues: UDP-N-acetylmuramoylalanine--D-glutamate ligase (450 aa).

An ATP-binding site is contributed by 115–121; that stretch reads GTNGKTT.

It belongs to the MurCDEF family.

Its subcellular location is the cytoplasm. The enzyme catalyses UDP-N-acetyl-alpha-D-muramoyl-L-alanine + D-glutamate + ATP = UDP-N-acetyl-alpha-D-muramoyl-L-alanyl-D-glutamate + ADP + phosphate + H(+). It participates in cell wall biogenesis; peptidoglycan biosynthesis. Its function is as follows. Cell wall formation. Catalyzes the addition of glutamate to the nucleotide precursor UDP-N-acetylmuramoyl-L-alanine (UMA). This is UDP-N-acetylmuramoylalanine--D-glutamate ligase from Caldanaerobacter subterraneus subsp. tengcongensis (strain DSM 15242 / JCM 11007 / NBRC 100824 / MB4) (Thermoanaerobacter tengcongensis).